A 265-amino-acid chain; its full sequence is Lipopolysaccharide core heptose(I) kinase WaaP (265 aa).

Aspartate 162 is an active-site residue.

Belongs to the protein kinase superfamily. KdkA/RfaP family. Requires Mg(2+) as cofactor.

The catalysed reaction is an L-alpha-D-Hep-(1-&gt;3)-L-alpha-D-Hep-(1-&gt;5)-[alpha-Kdo-(2-&gt;4)]-alpha-Kdo-(2-&gt;6)-lipid A + ATP = an L-alpha-D-Hep-(1-&gt;3)-4-O-phospho-L-alpha-D-Hep-(1-&gt;5)-[alpha-Kdo-(2-&gt;4)]-alpha-Kdo-(2-&gt;6)-lipid A + ADP + H(+). It catalyses the reaction L-alpha-D-Hep-(1-&gt;3)-L-alpha-D-Hep-(1-&gt;5)-[alpha-Kdo-(2-&gt;4)]-alpha-Kdo-(2-&gt;6)-lipid A (E. coli) + ATP = L-alpha-D-Hep-(1-&gt;3)-4-O-phospho-L-alpha-D-Hep-(1-&gt;5)-[alpha-Kdo-(2-&gt;4)]-alpha-Kdo-(2-&gt;6)-lipid A (E. coli) + ADP + H(+). It functions in the pathway bacterial outer membrane biogenesis; LPS core biosynthesis. Its function is as follows. Kinase involved in the biosynthesis of the core oligosaccharide region of lipopolysaccharide (LPS). Catalyzes the phosphorylation of heptose I (HepI), the first heptose added to the Kdo2-lipid A module. The polypeptide is Lipopolysaccharide core heptose(I) kinase WaaP (Escherichia coli (strain K12)).